A 478-amino-acid chain; its full sequence is Transposon Ty1-H Gag polyprotein (478 aa).

Polar residues-rich tracts occupy residues 1–10 (MESQQLSNYP), 48–60 (TKAN…TPAS), and 127–152 (QSQF…GNTF). Disordered stretches follow at residues 1–84 (MESQ…QNGP), 126–174 (PQSQ…PPPM), and 390–478 (GSRN…PETY). Residues 153–165 (TDSSSADSDMTST) are compositionally biased toward low complexity. An RNA-binding region spans residues 337 to 439 (NNGIHINNKV…NSKSKTARAH (103 aa)). Residues 440 to 456 (NVSTSNNSPSTDNDSIS) show a composition bias toward low complexity. Residues 457-466 (KSTTEPIQLN) are compositionally biased toward polar residues. Residues 467–478 (NKHDLHLRPETY) are compositionally biased toward basic and acidic residues.

In terms of assembly, homotrimer.

It localises to the cytoplasm. In terms of biological role, capsid protein (CA) is the structural component of the virus-like particle (VLP), forming the shell that encapsulates the retrotransposons dimeric RNA genome. The particles are assembled from trimer-clustered units and there are holes in the capsid shells that allow for the diffusion of macromolecules. CA also has nucleocapsid-like chaperone activity, promoting primer tRNA(i)-Met annealing to the multipartite primer-binding site (PBS), dimerization of Ty1 RNA and initiation of reverse transcription. The polypeptide is Transposon Ty1-H Gag polyprotein (TY1A-H) (Saccharomyces cerevisiae (strain ATCC 204508 / S288c) (Baker's yeast)).